We begin with the raw amino-acid sequence, 398 residues long: Enoyl-[acyl-carrier-protein] reductase [NADH] (398 aa).

NAD(+) is bound by residues 48-53 (GSSTGY), 74-75 (FE), 111-112 (DA), and 139-140 (LA). Tyrosine 225 is a substrate binding site. Tyrosine 235 functions as the Proton donor in the catalytic mechanism. NAD(+) is bound by residues lysine 244 and 273 to 275 (VVT).

This sequence belongs to the TER reductase family. In terms of assembly, monomer.

The catalysed reaction is a 2,3-saturated acyl-[ACP] + NAD(+) = a (2E)-enoyl-[ACP] + NADH + H(+). It participates in lipid metabolism; fatty acid biosynthesis. Functionally, involved in the final reduction of the elongation cycle of fatty acid synthesis (FAS II). Catalyzes the reduction of a carbon-carbon double bond in an enoyl moiety that is covalently linked to an acyl carrier protein (ACP). The chain is Enoyl-[acyl-carrier-protein] reductase [NADH] from Pseudomonas paraeruginosa (strain DSM 24068 / PA7) (Pseudomonas aeruginosa (strain PA7)).